The chain runs to 166 residues: Regulatory protein RecX (166 aa).

The protein belongs to the RecX family.

It localises to the cytoplasm. Functionally, modulates RecA activity. This chain is Regulatory protein RecX, found in Escherichia coli (strain K12 / MC4100 / BW2952).